Reading from the N-terminus, the 241-residue chain is Zinc finger CCHC domain-containing protein 17 (241 aa).

Residues 16–88 (YTIFQGEVAM…DRIKVSLSMK (73 aa)) form the S1 motif domain. A Phosphoserine modification is found at Ser-114. The segment at 131 to 148 (TTCKKCGCKGHFAKDCFM) adopts a CCHC-type zinc-finger fold. At Lys-144 the chain carries N6-acetyllysine. Residues 160–241 (EEEEEKEEAK…KKKHKKKHKE (82 aa)) form a disordered region. The span at 166–178 (EEAKAEGLEKPDP) shows a compositional bias: basic and acidic residues. The segment covering 182–198 (SSRKRKKEKKKKKHRDR) has biased composition (basic residues). Position 183 is a phosphoserine (Ser-183). Residues 211 to 225 (DTGKKARHSSKDSKA) are compositionally biased toward basic and acidic residues. Over residues 226–241 (TKKKKKKKKHKKKHKE) the composition is skewed to basic residues.

In terms of assembly, interacts with PNN. Associates with the 60S ribosomal subunit. In terms of tissue distribution, expressed in liver, brain, heart, kidney testis, stomach, small intestine, skin, thymus, uterus, placenta, spleen, lung and skeletal muscle.

The protein resides in the nucleus. It is found in the nucleolus. The sequence is that of Zinc finger CCHC domain-containing protein 17 (Zcchc17) from Mus musculus (Mouse).